The sequence spans 4644 residues: Cytoplasmic dynein 1 heavy chain 1 (4644 aa).

An N-acetylserine modification is found at Ser2. The interval Ser2 to Asn1865 is stem. 4 coiled-coil regions span residues Ala48–Asp69, Ser179–Ile200, Ala453–Ala476, and Thr541–Ala564. Ser68 carries the phosphoserine modification. The tract at residues Met446 to Ala701 is interaction with DYNC1I2. The interaction with DYNC1LI2 stretch occupies residues Ala649 to Ser800. N6-acetyllysine is present on Lys1123. Positions Thr1169 to Gln1201 form a coiled coil. Ser1228 bears the Phosphoserine mark. Coiled-coil stretches lie at residues Ala1229–Ser1250 and Arg1355–Phe1371. AAA regions lie at residues Tyr1866–Ser2097, Glu2178–Leu2450, Glu2554–Gly2803, and Val2897–Thr3166. Residues Gly1904–Thr1911 and Gly2222–Ser2229 contribute to the ATP site. The segment at Gly2388–Ser2408 is disordered. Residues Gly2593–Thr2600 and Gly2935–Thr2942 contribute to the ATP site. Coiled coils occupy residues Glu3187–Gln3273, Ala3394–Met3498, and Glu3735–Gln3798. Residues Glu3187–Met3498 form a stalk region. Lys3478 is modified (N6-acetyllysine). AAA stretches follow at residues Leu3551 to Arg3780 and Ala4003 to Thr4219. Ser4160 carries the post-translational modification Phosphoserine. At Lys4281 the chain carries N6-acetyllysine. Thr4364 is modified (phosphothreonine). At Ser4366 the chain carries Phosphoserine.

This sequence belongs to the dynein heavy chain family. As to quaternary structure, homodimer. The cytoplasmic dynein 1 complex consists of two catalytic heavy chains (HCs) and a number of non-catalytic subunits presented by intermediate chains (ICs), light intermediate chains (LICs) and light chains (LCs); the composition seems to vary in respect to the IC, LIC and LC composition. The heavy chain homodimer serves as a scaffold for the probable homodimeric assembly of the respective non-catalytic subunits. The ICs and LICs bind directly to the HC dimer and dynein LCs assemble on the IC dimer. Interacts with DYNC1LI1; DYNC1LI1 and DYNC1LI2 bind mutually exclusive to DYNC1H1. Interacts with DYNC1LI2; DYNC1LI1 and DYNC1LI2 bind mutually exclusive to DYNC1H1. Interacts with DYNC1I2. Interacts with BICD2. Interacts with DNALI1.

It is found in the cytoplasm. Its subcellular location is the cytoskeleton. In terms of biological role, cytoplasmic dynein 1 acts as a motor for the intracellular retrograde motility of vesicles and organelles along microtubules. Dynein has ATPase activity; the force-producing power stroke is thought to occur on release of ADP. Plays a role in mitotic spindle assembly and metaphase plate congression. In Mus musculus (Mouse), this protein is Cytoplasmic dynein 1 heavy chain 1 (Dync1h1).